Reading from the N-terminus, the 130-residue chain is Small ribosomal subunit protein uS11c (130 aa).

This sequence belongs to the universal ribosomal protein uS11 family. Part of the 30S ribosomal subunit.

It is found in the plastid. The protein localises to the chloroplast. The sequence is that of Small ribosomal subunit protein uS11c from Nephroselmis olivacea (Green alga).